A 176-amino-acid polypeptide reads, in one-letter code: ATP-dependent protease subunit HslV (176 aa).

Thr-2 is an active-site residue. Na(+) is bound by residues Gly-157, Cys-160, and Thr-163.

This sequence belongs to the peptidase T1B family. HslV subfamily. In terms of assembly, a double ring-shaped homohexamer of HslV is capped on each side by a ring-shaped HslU homohexamer. The assembly of the HslU/HslV complex is dependent on binding of ATP.

It localises to the cytoplasm. It catalyses the reaction ATP-dependent cleavage of peptide bonds with broad specificity.. Allosterically activated by HslU binding. Its function is as follows. Protease subunit of a proteasome-like degradation complex believed to be a general protein degrading machinery. The polypeptide is ATP-dependent protease subunit HslV (Photorhabdus laumondii subsp. laumondii (strain DSM 15139 / CIP 105565 / TT01) (Photorhabdus luminescens subsp. laumondii)).